The following is a 443-amino-acid chain: ATP-dependent protease ATPase subunit HslU (443 aa).

ATP contacts are provided by residues V18 and 60-65 (GVGKTE). Positions 136–158 (LPPPRDFNEDSQRTNADSSTRQL) are disordered. A compositionally biased stretch (polar residues) spans 148 to 157 (RTNADSSTRQ). ATP contacts are provided by D256, E321, and R393.

This sequence belongs to the ClpX chaperone family. HslU subfamily. A double ring-shaped homohexamer of HslV is capped on each side by a ring-shaped HslU homohexamer. The assembly of the HslU/HslV complex is dependent on binding of ATP.

The protein localises to the cytoplasm. Functionally, ATPase subunit of a proteasome-like degradation complex; this subunit has chaperone activity. The binding of ATP and its subsequent hydrolysis by HslU are essential for unfolding of protein substrates subsequently hydrolyzed by HslV. HslU recognizes the N-terminal part of its protein substrates and unfolds these before they are guided to HslV for hydrolysis. The protein is ATP-dependent protease ATPase subunit HslU of Marinobacter nauticus (strain ATCC 700491 / DSM 11845 / VT8) (Marinobacter aquaeolei).